A 281-amino-acid chain; its full sequence is ATP synthase subunit a (281 aa).

The next 6 membrane-spanning stretches (helical) occupy residues 50–70, 116–136, 145–165, 172–192, 219–239, and 246–266; these read FSFT…LLLV, FFPC…QGMI, HFLI…IVGF, FLSF…LVLL, VKIL…FYFI, and FIVL…AYVF.

This sequence belongs to the ATPase A chain family. As to quaternary structure, F-type ATPases have 2 components, CF(1) - the catalytic core - and CF(0) - the membrane proton channel. CF(1) has five subunits: alpha(3), beta(3), gamma(1), delta(1), epsilon(1). CF(0) has three main subunits: a, b and c.

It localises to the mitochondrion inner membrane. In terms of biological role, mitochondrial membrane ATP synthase (F(1)F(0) ATP synthase or Complex V) produces ATP from ADP in the presence of a proton gradient across the membrane which is generated by electron transport complexes of the respiratory chain. F-type ATPases consist of two structural domains, F(1) - containing the extramembraneous catalytic core and F(0) - containing the membrane proton channel, linked together by a central stalk and a peripheral stalk. During catalysis, ATP synthesis in the catalytic domain of F(1) is coupled via a rotary mechanism of the central stalk subunits to proton translocation. Key component of the proton channel; it may play a direct role in the translocation of protons across the membrane. The chain is ATP synthase subunit a (ATP6) from Oenothera berteroana (Bertero's evening primrose).